A 575-amino-acid polypeptide reads, in one-letter code: Proline--tRNA ligase (575 aa).

The protein belongs to the class-II aminoacyl-tRNA synthetase family. ProS type 1 subfamily. Homodimer.

Its subcellular location is the cytoplasm. It carries out the reaction tRNA(Pro) + L-proline + ATP = L-prolyl-tRNA(Pro) + AMP + diphosphate. Catalyzes the attachment of proline to tRNA(Pro) in a two-step reaction: proline is first activated by ATP to form Pro-AMP and then transferred to the acceptor end of tRNA(Pro). As ProRS can inadvertently accommodate and process non-cognate amino acids such as alanine and cysteine, to avoid such errors it has two additional distinct editing activities against alanine. One activity is designated as 'pretransfer' editing and involves the tRNA(Pro)-independent hydrolysis of activated Ala-AMP. The other activity is designated 'posttransfer' editing and involves deacylation of mischarged Ala-tRNA(Pro). The misacylated Cys-tRNA(Pro) is not edited by ProRS. In Desulfitobacterium hafniense (strain DSM 10664 / DCB-2), this protein is Proline--tRNA ligase.